The chain runs to 155 residues: MAEANLDPVFQIQRVYLKDLSLEQPNSPEILLNQEQPGVEIQLGVDAKPVAEGLFEITVTATVHTKIEEKTVFMVEAKQAGIFEIRNIQSDQMGALLGIACPQIVYPYLRSNVADIIQRGGFPPVHMAEINFQAMYEQQQAEAMMATSEAPQILV.

This sequence belongs to the SecB family. As to quaternary structure, homotetramer, a dimer of dimers. One homotetramer interacts with 1 SecA dimer.

It is found in the cytoplasm. Functionally, one of the proteins required for the normal export of preproteins out of the cell cytoplasm. It is a molecular chaperone that binds to a subset of precursor proteins, maintaining them in a translocation-competent state. It also specifically binds to its receptor SecA. The protein is Protein-export protein SecB 1 of Polaromonas naphthalenivorans (strain CJ2).